The sequence spans 354 residues: MAIDENKQKALAAALGQIEKQFGKGSIMRLGEDRSMDVETISTGSLSLDIALGAGGLPMGRIVEIYGPESSGKTTLTLQVIAAAQREGKTCAFIDAEHALDPIYAKKLGVDIDNLLCSQPDTGEQALEICDALTRSGAVDVIIVDSVAALTPKAEIEGEIGDSHMGLAARMMSQAMRKLAGNLKNANTLLIFINQIRMKIGVMFGNPETTTGGNALKFYASVRLDIRRIGAIKEGDVVVGSETRVKVVKNKIAAPFKQAEFQILYGEGININGELIDLGVKHKLIEKAGAWYSYNGEKIGQGKANSCNYLKENPKVAAELDKKLRDMLLSGTGELSVATTAEDADDNMETSEEF.

67 to 74 (GPESSGKT) contacts ATP.

Belongs to the RecA family.

It localises to the cytoplasm. Functionally, can catalyze the hydrolysis of ATP in the presence of single-stranded DNA, the ATP-dependent uptake of single-stranded DNA by duplex DNA, and the ATP-dependent hybridization of homologous single-stranded DNAs. It interacts with LexA causing its activation and leading to its autocatalytic cleavage. The protein is Protein RecA of Enterobacter agglomerans (Erwinia herbicola).